Reading from the N-terminus, the 201-residue chain is Large ribosomal subunit protein uL4 (201 aa).

Residues 45–71 (AQKTRAEVTGSGKKPWRQKGTGRARAG) are disordered.

This sequence belongs to the universal ribosomal protein uL4 family. In terms of assembly, part of the 50S ribosomal subunit.

Its function is as follows. One of the primary rRNA binding proteins, this protein initially binds near the 5'-end of the 23S rRNA. It is important during the early stages of 50S assembly. It makes multiple contacts with different domains of the 23S rRNA in the assembled 50S subunit and ribosome. In terms of biological role, forms part of the polypeptide exit tunnel. The sequence is that of Large ribosomal subunit protein uL4 from Shewanella sp. (strain MR-4).